We begin with the raw amino-acid sequence, 432 residues long: MQSKTFSVLSSCLLLIATVQGQLSGSVGPSTSISDKKAVKTCNVLDYGATNDNKTDVGQPIMNAFEDCGSGGVIYIPEGDYLIQEWVSLRNGTAFAIQLDGVIYRNGTTTSQGYMFGISGGSDFELYSSTSKGAIQGSGYLYHMNGEFTAPRLLHISDVSHWSVHDIALVDAPMFHFVIDDASNGEVYNMAIRGGNSGGLDGIDVSGDNIWIHDVMVTNKDECVTVKTGSHNFQIENIYCNWSGGCAMDSLGSGTNVSNIVYRNIYTWNSNQMYMIKSNGGDGEVSNLLFENFIGHGNAYSLDLDSEWSSMDTVDGDDGESRPPIRVICPEAIPCTDITIEDVDLWTEEGDSETYVCKNAFGSGACLKSDSSSTATYATTTTVTSAPSGYSATTMAADLTSAFGTDASIPIPTIPTSFYPGATPYSALAGSS.

The first 21 residues, 1 to 21, serve as a signal peptide directing secretion; sequence MQSKTFSVLSSCLLLIATVQG. A disulfide bridge links C42 with C68. N-linked (GlcNAc...) asparagine glycans are attached at residues N53, N91, and N106. Catalysis depends on D221, which acts as the Proton donor. A disulfide bond links C223 and C240. Residues N241 and N256 are each glycosylated (N-linked (GlcNAc...) asparagine). Residue H296 is part of the active site. 2 disulfides stabilise this stretch: C329–C335 and C357–C366.

This sequence belongs to the glycosyl hydrolase 28 family.

Its subcellular location is the secreted. Its function is as follows. Pectinolytic enzymes consist of four classes of enzymes: pectine lyase, polygalacturonase, pectin methylesterase and rhamnogalacturonase. Hydrolyzes alpha-D-galacturonopyranosyl-(1,2)-alpha-L-rhamnopyranosyl linkages in the backbone of the hairy regions of pectins. This is Probable rhamnogalacturonase E (rhgE) from Aspergillus oryzae (strain ATCC 42149 / RIB 40) (Yellow koji mold).